A 529-amino-acid chain; its full sequence is MSRGMSGLEDSSDLVVSPYVRMGGLTTDPVPTGGDDPHKVAMLGLTFDDVLLLPAASDVVPATADTSSQLTKKIRLKVPLVSSAMDTVTESRMAIAMARAGGMGVLHRNLPVAEQAGQVEMVKRSEAGMVTDPVTCRPDNTLAQVDALCARFRISGLPVVDDDGALVGIITNRDMRFEVDQSKQVAEVMTKAPLITAQEGVSASAALGLLRRNKIEKLPVVDGRGRLTGLITVKDFVKTEQHPLATKDSDGRLLVGAAVGVGGDAWVRAMMLVDAGVDVLVVDTAHAHNRLVLDMVGKLKSEVGDRVEVVGGNVATRSAAAALVDAGADAVKVGVGPGSICTTRVVAGVGAPQITAILEAVAACRPAGVPVIADGGLQYSGDIAKALAAGASTAMLGSLLAGTAEAPGELIFVNGKQYKSYRGMGSLGAMRGRGGATSYSKDRYFADDALSEDKLVPEGIEGRVPFRGPLSSVIHQLTGGLRAAMGYTGSPTIEVLQQAQFVRITPAGLKESHPHDVAMTVEAPNYYAR.

2 CBS domains span residues 129–185 and 189–246; these read MVTD…SKQV and MTKA…PLAT. NAD(+) contacts are provided by residues Asp-283 and 334 to 336; that span reads GVG. K(+)-binding residues include Gly-336 and Gly-338. IMP is bound at residue Ser-339. Cys-341 contributes to the K(+) binding site. The active-site Thioimidate intermediate is the Cys-341. IMP-binding positions include 374–376, 397–398, and 421–425; these read DGG, GS, and YRGMG. Arg-443 (proton acceptor) is an active-site residue. Position 458 (Glu-458) interacts with IMP. Glu-511, Ser-512, and His-513 together coordinate K(+).

It belongs to the IMPDH/GMPR family. As to quaternary structure, homotetramer. It depends on K(+) as a cofactor.

It catalyses the reaction IMP + NAD(+) + H2O = XMP + NADH + H(+). It functions in the pathway purine metabolism; XMP biosynthesis via de novo pathway; XMP from IMP: step 1/1. With respect to regulation, mycophenolic acid (MPA) is a non-competitive inhibitor that prevents formation of the closed enzyme conformation by binding to the same site as the amobile flap. In contrast, mizoribine monophosphate (MZP) is a competitive inhibitor that induces the closed conformation. MPA is a potent inhibitor of mammalian IMPDHs but a poor inhibitor of the bacterial enzymes. MZP is a more potent inhibitor of bacterial IMPDH. Functionally, catalyzes the conversion of inosine 5'-phosphate (IMP) to xanthosine 5'-phosphate (XMP), the first committed and rate-limiting step in the de novo synthesis of guanine nucleotides, and therefore plays an important role in the regulation of cell growth. This chain is Inosine-5'-monophosphate dehydrogenase, found in Mycobacterium bovis (strain ATCC BAA-935 / AF2122/97).